The primary structure comprises 192 residues: MYQDLIRNELNEAAETLANFLKDDANIHAIQRAAVLLADSFKAGGKVLSCGNGGSHCDAMHFAEELTGRYRENRPGYPAIAISDVSHISCVGNDFGFNDIFSRYVEAVGREGDVLLGISTSGNSANVIKAIAAAREKGMKVITLTGKDGGKMAGTADIEIRVPHFGYADRIQEIHIKVIHILIQLIEKEMVK.

Positions 37-192 (LADSFKAGGK…IQLIEKEMVK (156 aa)) constitute an SIS domain. A substrate-binding site is contributed by 52–54 (NGG). 2 residues coordinate Zn(2+): His61 and Glu65. Residues Glu65, 93–94 (ND), 119–121 (STS), Ser124, and Gln172 each bind substrate. Gln172 and His180 together coordinate Zn(2+).

Belongs to the SIS family. GmhA subfamily. Homotetramer. Requires Zn(2+) as cofactor.

It is found in the cytoplasm. It catalyses the reaction 2 D-sedoheptulose 7-phosphate = D-glycero-alpha-D-manno-heptose 7-phosphate + D-glycero-beta-D-manno-heptose 7-phosphate. The protein operates within carbohydrate biosynthesis; D-glycero-D-manno-heptose 7-phosphate biosynthesis; D-glycero-alpha-D-manno-heptose 7-phosphate and D-glycero-beta-D-manno-heptose 7-phosphate from sedoheptulose 7-phosphate: step 1/1. In terms of biological role, catalyzes the isomerization of sedoheptulose 7-phosphate in D-glycero-D-manno-heptose 7-phosphate. This is Phosphoheptose isomerase from Escherichia coli O139:H28 (strain E24377A / ETEC).